We begin with the raw amino-acid sequence, 359 residues long: Spore germination protein GerQC (359 aa).

The first 16 residues, 1-16 (MKRWILFLILSVFLIG), serve as a signal peptide directing secretion. The N-palmitoyl cysteine moiety is linked to residue Cys-17. Residue Cys-17 is the site of S-diacylglycerol cysteine attachment.

Belongs to the GerABKC lipoprotein family.

The protein resides in the membrane. Its function is as follows. Required for the germination response to inosine. Has no role in L-alanine germination. The polypeptide is Spore germination protein GerQC (gerQC) (Bacillus cereus).